The chain runs to 168 residues: Photosystem I assembly protein Ycf3 (168 aa).

TPR repeat units lie at residues 35–68 (AFTY…EIDP), 72–105 (SYIL…NPFL), and 120–153 (GEQA…TPGN).

Belongs to the Ycf3 family.

It is found in the plastid. It localises to the chloroplast thylakoid membrane. In terms of biological role, essential for the assembly of the photosystem I (PSI) complex. May act as a chaperone-like factor to guide the assembly of the PSI subunits. This is Photosystem I assembly protein Ycf3 from Buxus microphylla (Littleleaf boxwood).